Consider the following 103-residue polypeptide: MYAVLATGGKQYRVQEGDVIYVEKLNADVDSTVELNEVLAVGTEEGIKVGAPVVEGAKVVAKVAAQGKAKKVVVFKYKSKKDYRRKNGHRQPYTKLVIEKIEA.

Belongs to the bacterial ribosomal protein bL21 family. In terms of assembly, part of the 50S ribosomal subunit. Contacts protein L20.

In terms of biological role, this protein binds to 23S rRNA in the presence of protein L20. In Clostridium beijerinckii (strain ATCC 51743 / NCIMB 8052) (Clostridium acetobutylicum), this protein is Large ribosomal subunit protein bL21.